The following is a 397-amino-acid chain: Acetate kinase (397 aa).

Residue asparagine 7 participates in Mg(2+) binding. Residue lysine 14 participates in ATP binding. Arginine 90 serves as a coordination point for substrate. Aspartate 147 serves as the catalytic Proton donor/acceptor. Residues histidine 207–glycine 211, aspartate 282–arginine 284, and glycine 330–asparagine 334 each bind ATP. Mg(2+) is bound at residue glutamate 383.

Belongs to the acetokinase family. In terms of assembly, homodimer. Requires Mg(2+) as cofactor. Mn(2+) is required as a cofactor.

It localises to the cytoplasm. The enzyme catalyses acetate + ATP = acetyl phosphate + ADP. It participates in metabolic intermediate biosynthesis; acetyl-CoA biosynthesis; acetyl-CoA from acetate: step 1/2. Catalyzes the formation of acetyl phosphate from acetate and ATP. Can also catalyze the reverse reaction. The polypeptide is Acetate kinase (Clostridium botulinum (strain Loch Maree / Type A3)).